Consider the following 248-residue polypeptide: tRNA (guanine-N(1)-)-methyltransferase (248 aa).

S-adenosyl-L-methionine is bound by residues glycine 113 and 133 to 138 (IGDYVL). The tract at residues 226–248 (ARPAQTIRAKGESQKTPKNKTDG) is disordered. Residues 234-248 (AKGESQKTPKNKTDG) are compositionally biased toward basic and acidic residues.

Belongs to the RNA methyltransferase TrmD family. As to quaternary structure, homodimer.

Its subcellular location is the cytoplasm. The enzyme catalyses guanosine(37) in tRNA + S-adenosyl-L-methionine = N(1)-methylguanosine(37) in tRNA + S-adenosyl-L-homocysteine + H(+). In terms of biological role, specifically methylates guanosine-37 in various tRNAs. This chain is tRNA (guanine-N(1)-)-methyltransferase, found in Rhodopseudomonas palustris (strain ATCC BAA-98 / CGA009).